The sequence spans 95 residues: Mitochondrial import inner membrane translocase subunit Tim13 (95 aa).

Met-1 bears the N-acetylmethionine mark. Position 7 is a phosphoserine (Ser-7). Positions 46–69 match the Twin CX3C motif motif; sequence CFRKCIGKPGGSLDNSEQKCIAMC. Intrachain disulfides connect Cys-46-Cys-69 and Cys-50-Cys-65. Residue Lys-53 is modified to N6-succinyllysine.

This sequence belongs to the small Tim family. In terms of assembly, heterohexamer; composed of 3 copies of TIMM8 (TIMM8A or TIMM8B) and 3 copies of TIMM13, named soluble 70 kDa complex. Associates with the TIM22 complex, whose core is composed of TIMM22. As to expression, ubiquitous, with highest expression in heart, kidney, liver and skeletal muscle.

It is found in the mitochondrion inner membrane. Its function is as follows. Mitochondrial intermembrane chaperone that participates in the import and insertion of some multi-pass transmembrane proteins into the mitochondrial inner membrane. Also required for the transfer of beta-barrel precursors from the TOM complex to the sorting and assembly machinery (SAM complex) of the outer membrane. Acts as a chaperone-like protein that protects the hydrophobic precursors from aggregation and guide them through the mitochondrial intermembrane space. The TIMM8-TIMM13 complex mediates the import of proteins such as TIMM23, SLC25A12/ARALAR1 and SLC25A13/ARALAR2, while the predominant TIMM9-TIMM10 70 kDa complex mediates the import of much more proteins. The chain is Mitochondrial import inner membrane translocase subunit Tim13 (TIMM13) from Homo sapiens (Human).